The sequence spans 106 residues: uncharacterized protein (106 aa).

The next 2 membrane-spanning stretches (helical) occupy residues 53–70 and 74–93; these read LLLL…LDII and ILGL…WTLI.

The protein resides in the cell membrane. This is an uncharacterized protein from Bacillus subtilis (strain 168).